Consider the following 87-residue polypeptide: Phosphoribosyl-ATP pyrophosphatase (87 aa).

It belongs to the PRA-PH family.

It localises to the cytoplasm. It catalyses the reaction 1-(5-phospho-beta-D-ribosyl)-ATP + H2O = 1-(5-phospho-beta-D-ribosyl)-5'-AMP + diphosphate + H(+). It functions in the pathway amino-acid biosynthesis; L-histidine biosynthesis; L-histidine from 5-phospho-alpha-D-ribose 1-diphosphate: step 2/9. The protein is Phosphoribosyl-ATP pyrophosphatase of Bifidobacterium longum (strain DJO10A).